A 396-amino-acid chain; its full sequence is Putative isochorismate synthase (396 aa).

This sequence belongs to the isochorismate synthase family.

It carries out the reaction chorismate = isochorismate. It participates in siderophore biosynthesis; amonabactin biosynthesis. Involved in the synthesis of amonabactin, a phenolate siderophore containing 2,3-dihydroxybenzoic acid (2,3-DHB). The protein is Putative isochorismate synthase (amoA) of Aeromonas hydrophila.